The chain runs to 750 residues: Photosystem I P700 chlorophyll a apoprotein A1 (750 aa).

8 helical membrane passes run V70–A93, L156–H179, L195–L219, I291–Y309, W346–Y369, L385–V411, A433–H455, and F531–L549. [4Fe-4S] cluster contacts are provided by C573 and C582. Transmembrane regions (helical) follow at residues H589 to W610 and L664 to F686. Chlorophyll a' is bound at residue H675. The chlorophyll a site is built by M683 and Y691. W692 lines the phylloquinone pocket. A helical membrane pass occupies residues A724–A744.

This sequence belongs to the PsaA/PsaB family. In terms of assembly, the PsaA/B heterodimer binds the P700 chlorophyll special pair and subsequent electron acceptors. PSI consists of a core antenna complex that captures photons, and an electron transfer chain that converts photonic excitation into a charge separation. The eukaryotic PSI reaction center is composed of at least 11 subunits. The cofactor is P700 is a chlorophyll a/chlorophyll a' dimer, A0 is one or more chlorophyll a, A1 is one or both phylloquinones and FX is a shared 4Fe-4S iron-sulfur center..

It localises to the plastid. Its subcellular location is the chloroplast thylakoid membrane. It catalyses the reaction reduced [plastocyanin] + hnu + oxidized [2Fe-2S]-[ferredoxin] = oxidized [plastocyanin] + reduced [2Fe-2S]-[ferredoxin]. Functionally, psaA and PsaB bind P700, the primary electron donor of photosystem I (PSI), as well as the electron acceptors A0, A1 and FX. PSI is a plastocyanin-ferredoxin oxidoreductase, converting photonic excitation into a charge separation, which transfers an electron from the donor P700 chlorophyll pair to the spectroscopically characterized acceptors A0, A1, FX, FA and FB in turn. Oxidized P700 is reduced on the lumenal side of the thylakoid membrane by plastocyanin. The polypeptide is Photosystem I P700 chlorophyll a apoprotein A1 (Vitis vinifera (Grape)).